Consider the following 419-residue polypeptide: Copalyl diphosphate synthase 2, chloroplastic (419 aa).

Lys-82 serves as a coordination point for substrate.

Belongs to the terpene synthase family. Tpsc subfamily. Mg(2+) serves as cofactor. In terms of tissue distribution, ubiquitous expression in roots, stems, leaves and flowers.

Its subcellular location is the plastid. The protein localises to the chloroplast. It carries out the reaction (2E,6E,10E)-geranylgeranyl diphosphate = (+)-copalyl diphosphate. It functions in the pathway secondary metabolite biosynthesis; terpenoid biosynthesis. Its function is as follows. Involved in the biosynthesis of ent-kaurene diterpenoids natural products such as oridonin, miltiradiene, eriocalyxin B and nezukol, known to exhibit antitumor, anti-inflammatory and antibacterial activities. Catalyzes the conversion of (2E,6E,10E)-geranylgeranyl diphosphate (GGPP) to (+)-copalyl diphosphate ((+)-CPP). In Isodon rubescens (Rabdosia rubescens), this protein is Copalyl diphosphate synthase 2, chloroplastic.